We begin with the raw amino-acid sequence, 363 residues long: Peroxisomal (S)-2-hydroxyacid oxidase GLO3 (363 aa).

The 357-residue stretch at 1–357 (MDQIVNVDEF…TRNHVRTENE (357 aa)) folds into the FMN hydroxy acid dehydrogenase domain. Residues 78–80 (PTG), S107, 128–130 (QIY), and T156 contribute to the FMN site. Y130 is an a 2-oxocarboxylate binding site. R165 is an a 2-oxocarboxylate binding site. FMN-binding residues include K228 and S250. The Proton acceptor role is filled by H252. R255 lines the a 2-oxocarboxylate pocket. Residues 283–287 (DGGVR) and 306–307 (GR) contribute to the FMN site. A Microbody targeting signal motif is present at residues 361–363 (SML).

It belongs to the FMN-dependent alpha-hydroxy acid dehydrogenase family. As to quaternary structure, homotetramer. Requires FMN as cofactor.

Its subcellular location is the peroxisome. It carries out the reaction a (2S)-2-hydroxycarboxylate + O2 = a 2-oxocarboxylate + H2O2. It catalyses the reaction 2-hydroxy-4-methylpentanoate + O2 = 4-methyl-2-oxopentanoate + H2O2. The enzyme catalyses 2-hydroxyhexanoate + O2 = 2-oxohexanoate + H2O2. The catalysed reaction is 2-hydroxyoctanoate + O2 = 2-oxooctanoate + H2O2. Its function is as follows. Oxidase that catalyzes the oxidation of a broad range of 2-hydroxyacids to the corresponding 2-oxoacids, with a reduction of O2 to H2O2. Displays the highest activity with leucic acid (2-hydroxy-4-methylpentanoate) and has intermediate activity with 2-hydroxyhexanoate and 2-hydroxyoctanote. Shows lower activity with 2-hydroxydodecanoate, valic acid, and isoleucic acid and extremely low activity with glycolate and L-lactate. Cannot use 2-hydroxyhexadecanoate or D-lactate as substrates. May be involved in the conversion or degradation of 2-hydroxyacids produced during the metabolism of fatty acids or amino acids. The sequence is that of Peroxisomal (S)-2-hydroxyacid oxidase GLO3 (GLO3) from Arabidopsis thaliana (Mouse-ear cress).